The chain runs to 113 residues: Protein PucD (113 aa).

Seems to be required for the LH-II stabilization. This chain is Protein PucD (pucD), found in Rhodobacter capsulatus (Rhodopseudomonas capsulata).